The sequence spans 586 residues: Mitochondrial tRNA methylthiotransferase CDK5RAP1 (586 aa).

Residues 1 to 30 (MHPLQRVFRAQRLSAPLTSMCWVLLRTFRA) constitute a mitochondrion transit peptide. A disordered region spans residues 68–90 (ASVPQEKPSSPEVEDPPPYLSGD). Residues 97–217 (RKVYLETYGC…LPRLLAVVES (121 aa)) form the MTTase N-terminal domain. [4Fe-4S] cluster is bound by residues cysteine 106, cysteine 142, cysteine 180, cysteine 255, cysteine 259, and cysteine 262. The 255-residue stretch at 241-495 (SPSATSAFVS…ITVFREEASK (255 aa)) folds into the Radical SAM core domain. The TRAM domain maps to 498 to 573 (ATSVGCTQLV…SQTLKGHILC (76 aa)).

The protein belongs to the methylthiotransferase family. MiaB subfamily. In terms of assembly, interacts with CDK5R1 (p35 form). CDK5RAP1, CDK5RAP2 and CDK5RAP3 show competitive binding to CDK5R1. Forms a complex with CDK5R1 and CDK5. Requires [4Fe-4S] cluster as cofactor. As to expression, expressed in brain.

It is found in the mitochondrion inner membrane. The catalysed reaction is N(6)-dimethylallyladenosine(37) in tRNA + (sulfur carrier)-SH + AH2 + 2 S-adenosyl-L-methionine = 2-methylsulfanyl-N(6)-dimethylallyladenosine(37) in tRNA + (sulfur carrier)-H + 5'-deoxyadenosine + L-methionine + A + S-adenosyl-L-homocysteine + 2 H(+). Functionally, methylthiotransferase that catalyzes the conversion of N6-(dimethylallyl)adenosine (i(6)A) to 2-methylthio-N6-(dimethylallyl)adenosine (ms(2)i(6)A) at position 37 (adjacent to the 3'-end of the anticodon) of four mitochondrial DNA-encoded tRNAs (Ser(UCN), Phe, Tyr and Trp). Essential for efficient and highly accurate protein translation by the ribosome. Specifically inhibits CDK5 activation by CDK5R1. Essential for efficient mitochondrial protein synthesis and respiratory chain. This Rattus norvegicus (Rat) protein is Mitochondrial tRNA methylthiotransferase CDK5RAP1 (Cdk5rap1).